The sequence spans 379 residues: MASLASPPLPCRAAATASRSGRPAPRLLGPPPPPASPLLSSASARFPRAPCNAARWSRRDAVRVCSQAGAAGPAPLSKTLSDLKDSCWRFLRPHTIRGTALGSIALVARALIENPQLINWWLVFKAFYGLVALICGNGYIVGINQIYDIRIDKVNKPYLPIAAGDLSVQTAWLLVVLFAAAGFSIVVTNFGPFITSLYCLGLFLGTIYSVPPFRLKRYPVAAFLIIATVRGFLLNFGVYYATRAALGLTFQWSSPVAFITCFVTLFALVIAITKDLPDVEGDRKYQISTLATKLGVRNIAFLGSGLLIANYVAAIAVAFLMPQAFRRTVMVPVHAALAVGIIFQTWVLEQAKYTKDAISQYYRFIWNLFYAEYIFFPLI.

Residues M1–L39 form a disordered region. The transit peptide at M1–C65 directs the protein to the chloroplast. Helical transmembrane passes span W121 to V141, L174 to I194, T195 to L215, V220 to Y240, W252 to I272, I299 to F319, T328 to L348, and Y361 to L378.

This sequence belongs to the UbiA prenyltransferase family.

The protein localises to the plastid. The protein resides in the chloroplast thylakoid membrane. The catalysed reaction is phytyl diphosphate + homogentisate + H(+) = 2-methyl-6-phytyl-1,4-benzene-1,4-diol + CO2 + diphosphate. It functions in the pathway cofactor biosynthesis; tocopherol biosynthesis. Involved in the synthesis of tocopherol (vitamin E). Catalyzes the condensation of homogentisate and phytyl diphosphate to form dimethylphytylhydrquinone. This chain is Probable homogentisate phytyltransferase 2, chloroplastic (HPT2), found in Oryza sativa subsp. japonica (Rice).